The following is a 485-amino-acid chain: NADH-quinone oxidoreductase subunit N (485 aa).

14 consecutive transmembrane segments (helical) span residues 8–28 (LIALLPLLIVGLTVVVVMLSI), 35–55 (FLNATLSVIGLNAALVSLWFV), 71–91 (GFAMLYTGLVLLASLATCTFA), 105–125 (FYLLVLIAALGGILLANANHL), 127–147 (SLFLGIELISLPLFGLVGYAF), 159–179 (YTILSAAASSFLLFGMALVYA), 203–223 (LLAGFGMMIVGLGFKLSLVPF), 235–255 (PAPVSTFLATASKIAIFGVVM), 271–291 (VVLAIIAFASIIFGNLMALSQ), 297–317 (LLGYSSISHLGYLLVALIALQ), 326–346 (VGVYLAGYLFSSLGAFGVVSL), 373–393 (AAVMTVMMLSLAGIPMTLGFI), 408–430 (WWLVGAVVVGSAIGLYYYLRVAV), and 455–475 (IVVLISALLVLVLGVWPQPLI).

The protein belongs to the complex I subunit 2 family. NDH-1 is composed of 13 different subunits. Subunits NuoA, H, J, K, L, M, N constitute the membrane sector of the complex.

Its subcellular location is the cell inner membrane. It catalyses the reaction a quinone + NADH + 5 H(+)(in) = a quinol + NAD(+) + 4 H(+)(out). NDH-1 shuttles electrons from NADH, via FMN and iron-sulfur (Fe-S) centers, to quinones in the respiratory chain. The immediate electron acceptor for the enzyme in this species is believed to be ubiquinone. Couples the redox reaction to proton translocation (for every two electrons transferred, four hydrogen ions are translocated across the cytoplasmic membrane), and thus conserves the redox energy in a proton gradient. This chain is NADH-quinone oxidoreductase subunit N, found in Shigella flexneri.